Consider the following 236-residue polypeptide: MFRRRGVTLTKALLTAVCMLAAPLTQAISVGNLTFSLPSETDFVSKRVVNNNKSARIYRIAISAIDSPGSSELRTRPVDGELLFAPRQLALQAGESEYFKFYYHGPQDNRERYYRVSFREVPTRNLTKRSPTGGEVSTEPVVVMDTILVVRPRQVQFKWSFDQVTGTVSNTGNTWFKLLIKPGCDSTEEEGDAWYLRPEDVVHQPELRQPGNHYLVYNDKFIKISDSCPAKPPSAD.

An N-terminal signal peptide occupies residues 1–27; that stretch reads MFRRRGVTLTKALLTAVCMLAAPLTQA.

The protein belongs to the EcpB/EcpE family.

In terms of biological role, part of the ecpRABCDE operon, which encodes the E.coli common pilus (ECP). ECP is found in both commensal and pathogenic strains and plays a dual role in early-stage biofilm development and host cell recognition. The chain is Probable fimbrial chaperone EcpE (ecpE) from Escherichia coli O157:H7.